Consider the following 135-residue polypeptide: MAGAAAFVEADNAEEIMARIETKSQKIESLLKHYKHVEALKTALDGSPPKTLDERCKSANWIVVHRAIMAIKDIEGMLNSLTAEYYDILMKYLYRGLSTGDEPTCEQCLMIHEKLTERAGLGCILRCLSDTTNTV.

This sequence belongs to the ARPC5 family. Component of the Arp2/3 complex composed of ARP2, ARP3, ARPC1/p41-ARC, ARPC2/p34-ARC, ARPC3/p21-ARC, ARPC4/p20-ARC and ARPC5/p16-ARC.

The protein localises to the cytoplasm. It localises to the cytoskeleton. It is found in the cell projection. Its function is as follows. Functions as a component of the Arp2/3 complex which is involved in regulation of actin polymerization and together with an activating nucleation-promoting factor (NPF) mediates the formation of branched actin networks. Arp2/3 complex plays a critical role in the control of cell morphogenesis via the modulation of cell polarity development. In Arabidopsis thaliana (Mouse-ear cress), this protein is Actin-related protein 2/3 complex subunit 5B (ARPC5B).